Consider the following 302-residue polypeptide: Aspartate carbamoyltransferase catalytic subunit (302 aa).

Positions 53 and 54 each coordinate carbamoyl phosphate. Lys82 contributes to the L-aspartate binding site. Carbamoyl phosphate is bound by residues Arg103, His131, and Gln134. Positions 164 and 223 each coordinate L-aspartate. Positions 260 and 261 each coordinate carbamoyl phosphate.

The protein belongs to the aspartate/ornithine carbamoyltransferase superfamily. ATCase family. In terms of assembly, heterooligomer of catalytic and regulatory chains.

The enzyme catalyses carbamoyl phosphate + L-aspartate = N-carbamoyl-L-aspartate + phosphate + H(+). It participates in pyrimidine metabolism; UMP biosynthesis via de novo pathway; (S)-dihydroorotate from bicarbonate: step 2/3. Functionally, catalyzes the condensation of carbamoyl phosphate and aspartate to form carbamoyl aspartate and inorganic phosphate, the committed step in the de novo pyrimidine nucleotide biosynthesis pathway. This Methanococcus maripaludis (strain DSM 14266 / JCM 13030 / NBRC 101832 / S2 / LL) protein is Aspartate carbamoyltransferase catalytic subunit.